Here is a 57-residue protein sequence, read N- to C-terminus: Toxin GhoT (57 aa).

Transmembrane regions (helical) follow at residues 7–27 (ILIFYVIGVNISFVIIWFISH) and 37–57 (AFLVGITWPMSLPVALLFSLF).

Belongs to the GhoT/OrtT toxin family.

Its subcellular location is the cell inner membrane. Its function is as follows. Toxic component of a type V toxin-antitoxin (TA) system. Causes membrane damage when induced by MqsR, slowing cell growth and leading to the formation of dormant persister cells; involved with GhoS, its antitoxin, in reducing cell growth during antibacterial stress. Its toxic effects are neutralized by GhoS, which digests ghoT transcripts in a sequence-specific manner. The sequence is that of Toxin GhoT from Escherichia coli O157:H7.